We begin with the raw amino-acid sequence, 437 residues long: D-aminoacyl-tRNA deacylase (437 aa).

This sequence belongs to the DtdA deacylase family. In terms of assembly, monomer. The cofactor is Zn(2+).

The catalysed reaction is a D-aminoacyl-tRNA + H2O = a tRNA + a D-alpha-amino acid + H(+). The enzyme catalyses glycyl-tRNA(Ala) + H2O = tRNA(Ala) + glycine + H(+). D-aminoacyl-tRNA deacylase with broad substrate specificity. By recycling D-aminoacyl-tRNA to D-amino acids and free tRNA molecules, this enzyme counteracts the toxicity associated with the formation of D-aminoacyl-tRNA entities in vivo. The sequence is that of D-aminoacyl-tRNA deacylase from Methanoculleus marisnigri (strain ATCC 35101 / DSM 1498 / JR1).